Reading from the N-terminus, the 113-residue chain is Nucleoid-associated protein FMG_0513 (113 aa).

Residues 1 to 44 form a disordered region; sequence MGNKFRGGMPGMGNMGNMMKQMQKMQRQMEETQKRLEETEVTAT. Residues 15–26 are compositionally biased toward low complexity; the sequence is MGNMMKQMQKMQ. Basic and acidic residues predominate over residues 27–38; that stretch reads RQMEETQKRLEE.

The protein belongs to the YbaB/EbfC family. Homodimer.

It is found in the cytoplasm. Its subcellular location is the nucleoid. Its function is as follows. Binds to DNA and alters its conformation. May be involved in regulation of gene expression, nucleoid organization and DNA protection. This Finegoldia magna (strain ATCC 29328 / DSM 20472 / WAL 2508) (Peptostreptococcus magnus) protein is Nucleoid-associated protein FMG_0513.